A 364-amino-acid chain; its full sequence is Putative serine/threonine-protein phosphatase C06A1.3 (364 aa).

The disordered stretch occupies residues 1–24 (MSTDGNNNKKGSKEGPKSSEISKF). Positions 11-24 (GSKEGPKSSEISKF) are enriched in basic and acidic residues. Aspartate 93, histidine 95, aspartate 121, and asparagine 153 together coordinate Mn(2+). Histidine 154 functions as the Proton donor in the catalytic mechanism. The Mn(2+) site is built by histidine 202 and histidine 277.

It belongs to the PPP phosphatase family. PP-1 subfamily. Mn(2+) is required as a cofactor.

It carries out the reaction O-phospho-L-seryl-[protein] + H2O = L-seryl-[protein] + phosphate. The catalysed reaction is O-phospho-L-threonyl-[protein] + H2O = L-threonyl-[protein] + phosphate. This is Putative serine/threonine-protein phosphatase C06A1.3 from Caenorhabditis elegans.